The primary structure comprises 735 residues: NAD(P)H-quinone oxidoreductase subunit 5, chloroplastic (735 aa).

16 helical membrane passes run 9-29, 40-60, 89-109, 125-145, 147-167, 184-204, 219-239, 258-278, 280-300, 327-347, 354-374, 396-416, 425-445, 540-560, 600-620, and 714-734; these read WIIP…LLLF, WAFP…DLSI, IDSL…FVLI, FAYM…CNLI, IYIF…FWFT, IGDF…GSFE, NEVH…GAVA, TPIS…FLVA, LLPL…IGII, LGYM…FHLI, ALLF…VGYS, IAFL…CFWS, WLYS…TAFY, LFPM…AIPF, FSVS…KPFY, and FYLL…YFIL.

The protein belongs to the complex I subunit 5 family. As to quaternary structure, NDH is composed of at least 16 different subunits, 5 of which are encoded in the nucleus.

The protein resides in the plastid. It is found in the chloroplast thylakoid membrane. It carries out the reaction a plastoquinone + NADH + (n+1) H(+)(in) = a plastoquinol + NAD(+) + n H(+)(out). It catalyses the reaction a plastoquinone + NADPH + (n+1) H(+)(in) = a plastoquinol + NADP(+) + n H(+)(out). Functionally, NDH shuttles electrons from NAD(P)H:plastoquinone, via FMN and iron-sulfur (Fe-S) centers, to quinones in the photosynthetic chain and possibly in a chloroplast respiratory chain. The immediate electron acceptor for the enzyme in this species is believed to be plastoquinone. Couples the redox reaction to proton translocation, and thus conserves the redox energy in a proton gradient. The chain is NAD(P)H-quinone oxidoreductase subunit 5, chloroplastic (ndhF) from Gossypium hirsutum (Upland cotton).